The chain runs to 1131 residues: Homeobox-DDT domain protein RLT3 (1131 aa).

Positions 2-56 (KRKSPLQVQALEGFYLEQMYPTPKEMEDLGKSLGLTLKEVRGWFKRRRSRGKGVK) form a DNA-binding region, homeobox; TALE-type. The segment covering 239–251 (LQKRSTEKKRRSI) has biased composition (basic residues). A disordered region spans residues 239 to 264 (LQKRSTEKKRRSIHREAELNKDETQR). Basic and acidic residues predominate over residues 252-264 (HREAELNKDETQR). Positions 365-424 (PESVKKLFKVVHFLYTYSVTLDIGPFTLDEFTRAFHDKDSLLLGKIHLSLLKLLLLDVET) constitute a DDT domain. Positions 579 to 609 (EDPDKSQSDSDDSGSVDDESDDCSISSGDEI) are disordered. A compositionally biased stretch (acidic residues) spans 587 to 600 (DSDDSGSVDDESDD).

The protein resides in the nucleus. Functionally, transcriptional regulator required for the maintenance of the plant vegetative phase. May prevent the early activation of the vegetative-to-reproductive transition by regulating key genes that contribute to flower timing. This is Homeobox-DDT domain protein RLT3 from Arabidopsis thaliana (Mouse-ear cress).